Here is a 249-residue protein sequence, read N- to C-terminus: MEWTDDGIILGTRRHGEANAIVELLTRSHGRHLGLVRGGAGTRMRPLLQPGNSVGAVWRARLDEHLGYYALEGTRLRAATMLSYSHAAYGITHLAALARLLPERAPHDGIYEQFEAILEDFDDPVIAATHVVRFEMAMLEELGFGLDLSCCAATGTHTDLIYVSPKSGCAVSRSAGEPWRERLLPLPAFLRAGNEESSPDGEADIMEGFRLTGMFLLRNVLEPRGQAHSDARAGFIAAVARSRVTLAAE.

It belongs to the RecO family.

Involved in DNA repair and RecF pathway recombination. This chain is DNA repair protein RecO, found in Afipia carboxidovorans (strain ATCC 49405 / DSM 1227 / KCTC 32145 / OM5) (Oligotropha carboxidovorans).